Consider the following 83-residue polypeptide: MKASMFLALAGSVLLFVVGYASESEEKEFPIELLSKIFAVDVFKGEERGCKGFGDSCTPGKNECCPNHACSNKHKWCKVYLGK.

Residues 1-21 form the signal peptide; sequence MKASMFLALAGSVLLFVVGYA. Positions 22 to 48 are excised as a propeptide; that stretch reads SESEEKEFPIELLSKIFAVDVFKGEER. 3 disulfides stabilise this stretch: Cys50/Cys65, Cys57/Cys70, and Cys64/Cys77. Leu81 carries the leucine amide modification.

This sequence belongs to the neurotoxin 10 (Hwtx-1) family. 15 (Hntx-3) subfamily. In terms of assembly, monomer. As to expression, expressed by the venom gland.

It is found in the secreted. Functionally, lethal neurotoxin. Selectively blocks tetrodotoxin-sensitive voltage-gated sodium channels (Nav). Does not affect tetrodotoxin-resistant voltage-gated sodium channels or calcium channels. In Cyriopagopus hainanus (Chinese bird spider), this protein is Mu-theraphotoxin-Hhn2j 4.